The following is a 1117-amino-acid chain: MQSGTCESFQSLSHQRNDEEAVVDRGGTRSILKTHFEKEDLEGHRTLFIGVHVPLGGRKSHRRHRHRGHKHRKRDRERDSGLEDGRESPSFDTPSQRVQFILGTEDDDEEHIPHDLFTELDEICWREGEDAEWRETARWLKFEEDVEDGGERWSKPYVATLSLHSLFELRSCILNGTVLLDMHANTLEEIADMVLDQQVSSGQLNEDVRHRVHEALMKQHHHQNQKKLTNRIPIVRSFADIGKKQSEPNSMDKNAGQVVSPQSAPACVENKNDVSRENSTVDFSKGLGGQQKGHTSPCGMKQRHEKGPPHQQDREVDLHFMKKIPPGAEASNILVGELEFLDRTVVAFVRLSPAVLLQGLAEVPIPTRFLFILLGPLGKGQQYHEIGRSIATLMTDEVFHDVAYKAKDRNDLVSGIDEFLDQVTVLPPGEWDPSIRIEPPKNVPSQEKRKIPAVPNGTAAHGEAEPHGGHSGPELQRTGRLFGGLILDIKRKAPYFWSDFTDALSLQCLASFLFLYCACMSPVITFGGLLGEATEGRISAIESLFGASMTGIAYSLFGGQPLTILGSTGPVLVFEKILFKFCKEYGLSYLSLRASIGLWTATLCIILVATDASSLVCYITRFTEEAFASLICIIFIYEALEKLFELSEAYPINMHNDLELLTQYSCNCVEPHNPSNNTLKEWRESNISASDIIWENLTVSECTSLHGEYVGRACGHEHPYVPDVLFWSVILFFSTVTLSATLKQFKTSRYFPTKVRSIVSDFAVFLTILCMVLIDYAIGIPSPKLQVPSVFKPTRDDRGWFVTPLGPNPWWTVIAAIIPALLCTILIFMDQQITAVIINRKEHKLKKGCGYHLDLLMVAVMLGVCSIMGLPWFVAATVLSITHVNSLKLESECSAPGEQPKFLGIREQRVTGLMIFILMGSSVFMTSILKFIPMPVLYGVFLYMGASSLKGIQFFDRIKLFWMPAKHQPDFIYLRHVPLRKVHLFTVIQMSCLGLLWIIKVSRAAIVFPMMVLALVFVRKLMDFLFTKRELSWLDDLMPESKKKKLEDAEKEEEQSMLAMEDEGTVQLPLEGHYRDDPSVINISDEMSKTALWRNLLITADNSKDKESSFPSKSSPS.

Over residues Met-1–His-14 the composition is skewed to polar residues. Disordered regions lie at residues Met-1–Gly-26, Gly-57–Pro-94, Lys-244–Gln-312, and Asn-456–Leu-475. Residues Met-1–Cys-508 are Cytoplasmic-facing. The span at Gln-15 to Gly-26 shows a compositional bias: basic and acidic residues. Over residues Arg-58–Asp-75 the composition is skewed to basic residues. The span at Arg-76–Pro-89 shows a compositional bias: basic and acidic residues. Ser-88 carries the phosphoserine modification. Position 93 is a phosphothreonine (Thr-93). The span at Glu-247–Ser-263 shows a compositional bias: polar residues. At Ser-275 the chain carries Phosphoserine. The helical transmembrane segment at Leu-509–Leu-529 threads the bilayer. The Extracellular segment spans residues Leu-530 to Arg-537. The helical transmembrane segment at Ile-538–Gly-558 threads the bilayer. Residues Gly-559–Pro-561 are Cytoplasmic-facing. The helical transmembrane segment at Leu-562 to Cys-582 threads the bilayer. Residues Lys-583–Ser-595 lie on the Extracellular side of the membrane. A helical membrane pass occupies residues Ile-596 to Val-616. The Cytoplasmic segment spans residues Cys-617 to Glu-625. The helical transmembrane segment at Ala-626–Leu-646 threads the bilayer. Topologically, residues Ser-647–Pro-719 are extracellular. N-linked (GlcNAc...) asparagine glycosylation is found at Asn-673, Asn-676, Asn-686, and Asn-696. A helical transmembrane segment spans residues Tyr-720–Ala-740. Over Thr-741–Asp-761 the chain is Cytoplasmic. Residues Phe-762–Ser-782 traverse the membrane as a helical segment. Over Pro-783–Asn-808 the chain is Extracellular. Residues Pro-809 to Met-829 traverse the membrane as a helical segment. Residues Asp-830–Asp-854 are Cytoplasmic-facing. The chain crosses the membrane as a helical span at residues Leu-855–Ala-875. The Extracellular segment spans residues Ala-876–Thr-911. Residues Gly-912–Ile-932 traverse the membrane as a helical segment. Topologically, residues Pro-933–Met-934 are cytoplasmic. Residues Pro-935–Phe-955 traverse the membrane as a helical segment. Topologically, residues Asp-956–Trp-997 are extracellular. A helical transmembrane segment spans residues Ile-998–Val-1018. Topologically, residues Arg-1019 to Ser-1117 are cytoplasmic. A phosphoserine mark is found at Ser-1056 and Ser-1084.

This sequence belongs to the anion exchanger (TC 2.A.31) family. In terms of processing, N-glycosylated.

It is found in the basolateral cell membrane. Its subcellular location is the apical cell membrane. The protein localises to the cell projection. It localises to the dendrite. The protein resides in the axon. It is found in the perikaryon. Its subcellular location is the presynapse. The protein localises to the postsynapse. Its function is as follows. Sodium/bicarbonate cotransporter which plays an important role in regulating intracellular pH. Has been shown to act as a sodium/bicarbonate cotransporter in exchange for intracellular chloride. Has also been shown to act as a sodium/biocarbonate cotransporter which does not couple net influx of bicarbonate to net efflux of chloride, with the observed chloride efflux being due to chloride self-exchange. Controls neuronal pH and may contribute to the secretion of cerebrospinal fluid. Acting on presynaptic intracellular pH, it promotes GABA release, reduces the excitability of CA1 pyramidal neurons, and modulates short-term synaptic plasticity. Required in retinal cells to maintain normal pH which is necessary for normal vision. In the kidney, likely to mediate bicarbonate reclamation in the apical membrane of the proximal tubules. This is Sodium-driven chloride bicarbonate exchanger from Bos taurus (Bovine).